Reading from the N-terminus, the 235-residue chain is MPEATLTKKIIIAIDGPAASGKSTTAKQLAQKLSYTYIDTGAMYRAVTLKVLRDAFFEKIFSDELFLKKLLSETEVILKGEKVFLDGEEVTKDIRTNEVSSKVSKVSSLPLVREKLVEYQRNMGKARGVVMDGRDIGTIVFPDAELKVFMIADAKERAKRRYAELKAKSPSGDPGVTLETLEQEILQRDEDDRTRAIAPLRKPDDARELDTSKMTIEEQVAAIYELATDVISQLK.

16–24 (GPAASGKST) contacts ATP.

The protein belongs to the cytidylate kinase family. Type 1 subfamily.

It is found in the cytoplasm. The enzyme catalyses CMP + ATP = CDP + ADP. The catalysed reaction is dCMP + ATP = dCDP + ADP. The polypeptide is Cytidylate kinase (Chloroherpeton thalassium (strain ATCC 35110 / GB-78)).